The sequence spans 336 residues: Ketoreductase adrE (336 aa).

Tyr-171 is a binding site for NADP(+).

It belongs to the NAD(P)-dependent epimerase/dehydratase family. Dihydroflavonol-4-reductase subfamily.

It functions in the pathway secondary metabolite biosynthesis; terpenoid biosynthesis. Its function is as follows. Ketoreductase; part of the gene cluster that mediates the biosynthesis of andrastins, meroterpenoid compounds that exhibit inhibitory activity against ras farnesyltransferase, suggesting that they could be promising leads for antitumor agents. The first step of the pathway is the synthesis of 3,5-dimethylorsellinic acid (DMOA) by the polyketide synthase adrD via condensation of one acetyl-CoA starter unit with 3 malonyl-CoA units and 2 methylations. DMAO is then converted to farnesyl-DMAO by the prenyltransferase adrG. The methyltransferase adrK catalyzes the methylation of the carboxyl group of farnesyl-DMAO to farnesyl-DMAO methyl ester which is further converted to epoxyfarnesyl-DMAO methyl ester by the FAD-dependent monooxygenase adrH. The terpene cyclase adrI then catalyzes the carbon skeletal rearrangement to generate the andrastin E, the first compound in the pathway having the andrastin scaffold, with the tetracyclic ring system. The post-cyclization tailoring enzymes adrF, adrE, adrJ, and adrA, are involved in the conversion of andrastin E into andrastin A. The short chain dehydrogenase adrF is responsible for the oxidation of the C-3 a hydroxyl group of andrastin E to yield the corresponding ketone, andrastin D. The ketoreductase adrE stereoselectively reduces the carbonyl moiety to reverse the stereochemistry of the C-3 position to yield andrastin F. The acetyltransferase adrJ is the acetyltransferase that attaches the acetyl group to the C-3 hydroxyl group of andrastin F to yield andrastin C. Finally, the cytochrome P450 monooxygenase adrA catalyzes two sequential oxidation reactions of the C-23 methyl group, to generate the corresponding alcohol andrastin B, and aldehyde andrastin A. The polypeptide is Ketoreductase adrE (Penicillium roqueforti).